The chain runs to 612 residues: Peroxisomal carnitine O-octanoyltransferase (612 aa).

Met-1 carries the post-translational modification N-acetylmethionine. 2 positions are modified to N6-succinyllysine: Lys-40 and Lys-57. The Proton acceptor role is filled by His-327. CoA contacts are provided by residues Lys-406 and 410–417 (KNKMLHPD). Lys-406 carries the N6-acetyllysine; alternate modification. Residue Lys-406 is modified to N6-succinyllysine; alternate. (R)-carnitine is bound by residues Tyr-439, Thr-441, and Thr-452. Positions 610–612 (THL) match the Microbody targeting signal motif.

The protein belongs to the carnitine/choline acetyltransferase family. Monomer.

Its subcellular location is the peroxisome. It carries out the reaction octanoyl-CoA + (R)-carnitine = O-octanoyl-(R)-carnitine + CoA. The enzyme catalyses 4,8-dimethylnonanoyl-CoA + (R)-carnitine = O-4,8-dimethylnonanoyl-(R)-carnitine + CoA. Its pathway is lipid metabolism; fatty acid beta-oxidation. In terms of biological role, beta-oxidation of fatty acids. The highest activity concerns the C6 to C10 chain length substrate. Converts the end product of pristanic acid beta oxidation, 4,8-dimethylnonanoyl-CoA, to its corresponding carnitine ester. This chain is Peroxisomal carnitine O-octanoyltransferase (CROT), found in Homo sapiens (Human).